Reading from the N-terminus, the 291-residue chain is Tobamovirus multiplication protein 1 (291 aa).

The Cytoplasmic portion of the chain corresponds to Met-1–Asp-3. Residues Ser-4 to Trp-24 form a helical membrane-spanning segment. The Extracellular segment spans residues Asp-25–Gly-36. Asn-28 carries an N-linked (GlcNAc...) asparagine glycan. A helical membrane pass occupies residues Ile-37 to Ile-57. Residues Arg-58 to Asn-78 are Cytoplasmic-facing. A helical membrane pass occupies residues Phe-79 to His-99. At Pro-100 to Cys-104 the chain is on the extracellular side. Residues Trp-105–Phe-125 form a helical membrane-spanning segment. Residues Trp-126–Thr-144 are Cytoplasmic-facing. The helical transmembrane segment at Tyr-145–Val-165 threads the bilayer. Residues His-166–Glu-172 lie on the Extracellular side of the membrane. An N-linked (GlcNAc...) asparagine glycan is attached at Asn-168. Residues Leu-173 to Tyr-193 form a helical membrane-spanning segment. Residues Gly-194–Ser-220 lie on the Cytoplasmic side of the membrane. Residues Val-221–Phe-241 form a helical membrane-spanning segment. At Asp-242–Pro-253 the chain is on the extracellular side. Residues Val-254–Ile-274 form a helical membrane-spanning segment. Residues Leu-275–Gln-291 lie on the Cytoplasmic side of the membrane.

The protein belongs to the plant tobamovirus multiplication TOM1 protein family. Constituent of tobamovirus replication complex. Interacts with TOM2A and with the helicase domain of tobamovirus-encoded replication proteins.

It is found in the vacuole membrane. Necessary for the efficient intracellular multiplication of tobamoviruses, probably being a membrane anchor promoting the formation of the replication complex. This is Tobamovirus multiplication protein 1 (TOM1) from Arabidopsis thaliana (Mouse-ear cress).